Here is a 103-residue protein sequence, read N- to C-terminus: Large ribosomal subunit protein uL23 (103 aa).

The protein belongs to the universal ribosomal protein uL23 family. Part of the 50S ribosomal subunit. Contacts protein L29, and trigger factor when it is bound to the ribosome.

Its function is as follows. One of the early assembly proteins it binds 23S rRNA. One of the proteins that surrounds the polypeptide exit tunnel on the outside of the ribosome. Forms the main docking site for trigger factor binding to the ribosome. This is Large ribosomal subunit protein uL23 from Chlorobium phaeobacteroides (strain DSM 266 / SMG 266 / 2430).